We begin with the raw amino-acid sequence, 738 residues long: Eukaryotic translation initiation factor 3 subunit B (738 aa).

The segment covering 1 to 10 (MAPSFENLSE) has biased composition (polar residues). The segment at 1–20 (MAPSFENLSEQDLHEEEEEE) is disordered. An RRM domain is found at 40–126 (TFVVIDGLPV…HTLLVNKLMD (87 aa)). WD repeat units follow at residues 193–230 (AHWTQLFVQWSPKGTYLASVHPQGVQLWGGPTFSKQKQ), 232–289 (PHPF…RSFV), 301–342 (QPKK…LLGK), 454–494 (SLKD…SFFA), 511–554 (IEKK…EKND), and 569–607 (VDHYGVTDIEWDPTGRYVVSGASAWTHQMENGFNLHTFS). The segment at 693–720 (EAYGLPEEADQPKAAKDAPTNTEDKGET) is disordered. The span at 702 to 720 (DQPKAAKDAPTNTEDKGET) shows a compositional bias: basic and acidic residues.

This sequence belongs to the eIF-3 subunit B family. Component of the eukaryotic translation initiation factor 3 (eIF-3) complex.

The protein localises to the cytoplasm. Its function is as follows. RNA-binding component of the eukaryotic translation initiation factor 3 (eIF-3) complex, which is involved in protein synthesis of a specialized repertoire of mRNAs and, together with other initiation factors, stimulates binding of mRNA and methionyl-tRNAi to the 40S ribosome. The eIF-3 complex specifically targets and initiates translation of a subset of mRNAs involved in cell proliferation. The protein is Eukaryotic translation initiation factor 3 subunit B (prt1) of Emericella nidulans (strain FGSC A4 / ATCC 38163 / CBS 112.46 / NRRL 194 / M139) (Aspergillus nidulans).